Reading from the N-terminus, the 220-residue chain is PKHD-type hydroxylase sync_1544 (220 aa).

In terms of domain architecture, Fe2OG dioxygenase spans 79 to 173 (KLHRFLISKT…RTVCVGWIES (95 aa)). H97, D99, and H154 together coordinate Fe cation. R164 lines the 2-oxoglutarate pocket.

Requires Fe(2+) as cofactor. L-ascorbate is required as a cofactor.

This is PKHD-type hydroxylase sync_1544 from Synechococcus sp. (strain CC9311).